The primary structure comprises 483 residues: 6-phosphogluconate dehydrogenase, decarboxylating (483 aa).

Residues 10-15 and 33-35 each bind NADP(+); these read GLAVMG and NRT. An N6-acetyllysine modification is found at lysine 38. Residue serine 57 is modified to Phosphoserine. The residue at position 59 (lysine 59) is an N6-acetyllysine. Residues 75-77 and asparagine 103 each bind NADP(+); that span reads VKA. Residues asparagine 103 and 129-131 each bind substrate; that span reads SGG. Serine 129 is modified (phosphoserine). Lysine 184 (proton acceptor) is an active-site residue. Position 187–188 (187–188) interacts with substrate; it reads HN. Catalysis depends on glutamate 191, which acts as the Proton donor. Residues tyrosine 192, lysine 261, and arginine 288 each contribute to the substrate site. An N6-acetyllysine modification is found at lysine 309. Arginine 447 and histidine 453 together coordinate substrate. Residue 478–481 coordinates NADP(+); the sequence is SSSY.

This sequence belongs to the 6-phosphogluconate dehydrogenase family. In terms of assembly, homodimer.

Its subcellular location is the cytoplasm. It carries out the reaction 6-phospho-D-gluconate + NADP(+) = D-ribulose 5-phosphate + CO2 + NADPH. The protein operates within carbohydrate degradation; pentose phosphate pathway; D-ribulose 5-phosphate from D-glucose 6-phosphate (oxidative stage): step 3/3. Its function is as follows. Catalyzes the oxidative decarboxylation of 6-phosphogluconate to ribulose 5-phosphate and CO(2), with concomitant reduction of NADP to NADPH. The polypeptide is 6-phosphogluconate dehydrogenase, decarboxylating (PGD) (Homo sapiens (Human)).